A 67-amino-acid polypeptide reads, in one-letter code: Large ribosomal subunit protein uL29 (67 aa).

It belongs to the universal ribosomal protein uL29 family.

This Magnetococcus marinus (strain ATCC BAA-1437 / JCM 17883 / MC-1) protein is Large ribosomal subunit protein uL29.